A 139-amino-acid chain; its full sequence is GSK3B-interacting protein (139 aa).

The tract at residues 41 to 45 (VNDVL) is required for PRKAR2A interaction; contributes to a protective effect against H(2)O(2)-induced apoptosis. The interaction with GSK3B and acts as a GSK3B inhibitor stretch occupies residues 115–139 (SPAYREAFGNALLQRLEALKRDGQS).

It belongs to the GSKIP family. In terms of assembly, forms a complex composed of PRKAR2A or PRKAR2B, GSK3B and GSKIP through GSKIP interaction; facilitates PKA-induced phosphorylation of GSK3B leading to GSK3B inactivation; recruits DNM1L through GSK3B for PKA-mediated phosphorylation of DNM1L; promotes beta-catenin degradation through GSK3B-induced phosphorylation of beta-catenin; stabilizes beta-catenin and enhances Wnt-induced signaling through PKA-induced phosphorylation of beta-catenin. Interacts with GSK3B; induces GSK3B-mediated phosphorylation of GSKIP and inhibits GSK3B kinase activity. Phosphorylated by GSK3B.

The protein resides in the cytoplasm. It localises to the nucleus. Functionally, A-kinase anchoring protein for GSK3B and PKA that regulates or facilitates their kinase activity towards their targets. The ternary complex enhances Wnt-induced signaling by facilitating the GSK3B- and PKA-induced phosphorylation of beta-catenin leading to beta-catenin degradation and stabilization respectively. Upon cAMP activation, the ternary complex contributes to neuroprotection against oxidative stress-induced apoptosis by facilitating the PKA-induced phosphorylation of DML1 and PKA-induced inactivation of GSK3B. During neurite outgrowth promotes neuron proliferation; while increases beta-catenin-induced transcriptional activity through GSK3B kinase activity inhibition, reduces N-cadherin level to promote cell cycle progression. May play a role in cleft palate formation and is required for postnatal life through modulation of the activity of GSK3B during development. This Mus musculus (Mouse) protein is GSK3B-interacting protein.